Here is a 175-residue protein sequence, read N- to C-terminus: Outer membrane protein assembly factor BamE (175 aa).

The signal sequence occupies residues 1–21 (MQNTKLLLTSFTFVGLLALAG). C22 carries the N-palmitoyl cysteine lipid modification. A lipid anchor (S-diacylglycerol cysteine) is attached at C22. Disordered stretches follow at residues 117 to 147 (ALLG…KPGS) and 156 to 175 (IDNV…TSPQ).

This sequence belongs to the BamE family. In terms of assembly, part of the Bam complex.

The protein localises to the cell outer membrane. Part of the outer membrane protein assembly complex, which is involved in assembly and insertion of beta-barrel proteins into the outer membrane. May have a structural role in maintaining the cell envelope integrity. This Pseudomonas fluorescens protein is Outer membrane protein assembly factor BamE.